Here is a 470-residue protein sequence, read N- to C-terminus: Probable citrate synthase, mitochondrial (470 aa).

Active-site residues include His297, His351, and Asp406.

It belongs to the citrate synthase family. In terms of assembly, homodimer.

It is found in the mitochondrion matrix. It carries out the reaction oxaloacetate + acetyl-CoA + H2O = citrate + CoA + H(+). It functions in the pathway carbohydrate metabolism; tricarboxylic acid cycle; isocitrate from oxaloacetate: step 1/2. The protein is Probable citrate synthase, mitochondrial of Leishmania major.